The primary structure comprises 530 residues: Probable glycerol-3-phosphate acyltransferase 2 (530 aa).

The next 3 helical transmembrane spans lie at 70-90 (YFMV…LLVL), 93-113 (FISL…SFFG), and 275-295 (LVLF…LVFG). The short motif at 339–344 (HRTLLD) is the HXXXXD motif element.

It belongs to the GPAT/DAPAT family. Weakly or not expressed in roots, leaves, seedlings, developing siliques and flower buds.

Its subcellular location is the membrane. The catalysed reaction is sn-glycerol 3-phosphate + an acyl-CoA = a 1-acyl-sn-glycero-3-phosphate + CoA. It participates in phospholipid metabolism; CDP-diacylglycerol biosynthesis; CDP-diacylglycerol from sn-glycerol 3-phosphate: step 1/3. In terms of biological role, esterifies acyl-group from acyl-ACP to the sn-1 position of glycerol-3-phosphate, an essential step in glycerolipid biosynthesis. In Arabidopsis thaliana (Mouse-ear cress), this protein is Probable glycerol-3-phosphate acyltransferase 2 (GPAT2).